Here is a 450-residue protein sequence, read N- to C-terminus: tRNA-2-methylthio-N(6)-dimethylallyladenosine synthase (450 aa).

Residues 8-124 enclose the MTTase N-terminal domain; sequence RTLHITTWGC…LPELIAEIEA (117 aa). Residues Cys-17, Cys-52, Cys-87, Cys-162, Cys-166, and Cys-169 each coordinate [4Fe-4S] cluster. A Radical SAM core domain is found at 148–380; sequence ASQGPIAFLA…QAVLRDQQHA (233 aa). The TRAM domain maps to 383–445; it reads RAQVGRSFEV…PNSLMASLTQ (63 aa).

Belongs to the methylthiotransferase family. MiaB subfamily. As to quaternary structure, monomer. The cofactor is [4Fe-4S] cluster.

It localises to the cytoplasm. It carries out the reaction N(6)-dimethylallyladenosine(37) in tRNA + (sulfur carrier)-SH + AH2 + 2 S-adenosyl-L-methionine = 2-methylsulfanyl-N(6)-dimethylallyladenosine(37) in tRNA + (sulfur carrier)-H + 5'-deoxyadenosine + L-methionine + A + S-adenosyl-L-homocysteine + 2 H(+). In terms of biological role, catalyzes the methylthiolation of N6-(dimethylallyl)adenosine (i(6)A), leading to the formation of 2-methylthio-N6-(dimethylallyl)adenosine (ms(2)i(6)A) at position 37 in tRNAs that read codons beginning with uridine. The sequence is that of tRNA-2-methylthio-N(6)-dimethylallyladenosine synthase from Acidiphilium cryptum (strain JF-5).